The chain runs to 397 residues: Teichoic acid D-alanine hydrolase (397 aa).

Positions 1–23 are cleaved as a signal peptide; the sequence is MKFNKVKLVIHACVLLFIIISIA.

It is found in the cell membrane. It catalyses the reaction [(4-D-Ala)-(2-GlcNAc)-Rib-ol-P]n-[Gro-P]m-beta-D-ManNAc-(1-&gt;4)-alpha-D-GlcNAc-P-peptidoglycan + n H2O = [(2-GlcNAc)-Rib-ol-P]n-[Gro-P]m-beta-D-ManNAc-(1-&gt;4)-alpha-D-GlcNAc-P-peptidoglycan + n D-alanine.. In terms of biological role, catalyzes the liberation of D-alanyl moieties present on wall teichoic acid (WTA) and lipoteichoic acid (LTA). Affects the methicillin resistance level and autolysis in the presence of Triton X-100 as well as the cell wall structure. The sequence is that of Teichoic acid D-alanine hydrolase (fmtA) from Staphylococcus aureus (strain Mu50 / ATCC 700699).